The sequence spans 60 residues: Cytotoxin 7 (60 aa).

Intrachain disulfides connect C3-C21, C14-C38, C42-C53, and C54-C59.

Belongs to the three-finger toxin family. Short-chain subfamily. Type IA cytotoxin sub-subfamily. As to quaternary structure, monomer in solution; Homodimer and oligomer in the presence of negatively charged lipids forming a pore with a size ranging between 20 and 30 Angstroms. As to expression, expressed by the venom gland.

Its subcellular location is the secreted. It is found in the target cell membrane. In terms of biological role, shows cytolytic activity on many different cells by forming pore in lipid membranes. In vivo, increases heart rate or kills the animal by cardiac arrest. In addition, it binds to heparin with high affinity, interacts with Kv channel-interacting protein 1 (KCNIP1) in a calcium-independent manner, and binds to integrin alpha-V/beta-3 (ITGAV/ITGB3) with moderate affinity. Preferentially binds acidic phospholipids like phosphatidylserine, phosphatidic acid and phosphatidyl glycerol. Has hemolytic activity towards human erythrocytes (EC(50)=0.171 uM) and cytolytic activity towards various cell lines. The chain is Cytotoxin 7 from Naja naja (Indian cobra).